The chain runs to 252 residues: tRNA (guanine-N(1)-)-methyltransferase (252 aa).

S-adenosyl-L-methionine-binding positions include Gly113 and 133 to 138 (IGDYVL). Positions 229 to 238 (VARPAANAPA) are enriched in low complexity. The segment at 229-252 (VARPAANAPAKGESQKTPKNKTDG) is disordered. Basic and acidic residues predominate over residues 241 to 252 (ESQKTPKNKTDG).

This sequence belongs to the RNA methyltransferase TrmD family. Homodimer.

It localises to the cytoplasm. The enzyme catalyses guanosine(37) in tRNA + S-adenosyl-L-methionine = N(1)-methylguanosine(37) in tRNA + S-adenosyl-L-homocysteine + H(+). Functionally, specifically methylates guanosine-37 in various tRNAs. The chain is tRNA (guanine-N(1)-)-methyltransferase from Rhodopseudomonas palustris (strain HaA2).